A 257-amino-acid polypeptide reads, in one-letter code: 7-carboxy-7-deazaguanine synthase (257 aa).

A disordered region spans residues 1–25 (MKSVDHPVDVLPAEHSAETPGDARA). Substrate-binding positions include 39–41 (RQG) and R54. The Radical SAM core domain maps to 45–244 (LTGTESVFIR…AISRGYQYCD (200 aa)). [4Fe-4S] cluster-binding residues include C58, C62, and C65. Residue T67 coordinates Mg(2+). T99 provides a ligand contact to substrate. Residues G101 and 143-145 (SPK) contribute to the S-adenosyl-L-methionine site.

The protein belongs to the radical SAM superfamily. 7-carboxy-7-deazaguanine synthase family. Homodimer. [4Fe-4S] cluster is required as a cofactor. The cofactor is S-adenosyl-L-methionine. Mg(2+) serves as cofactor.

It carries out the reaction 6-carboxy-5,6,7,8-tetrahydropterin + H(+) = 7-carboxy-7-deazaguanine + NH4(+). Its pathway is purine metabolism; 7-cyano-7-deazaguanine biosynthesis. Its function is as follows. Catalyzes the complex heterocyclic radical-mediated conversion of 6-carboxy-5,6,7,8-tetrahydropterin (CPH4) to 7-carboxy-7-deazaguanine (CDG), a step common to the biosynthetic pathways of all 7-deazapurine-containing compounds. The chain is 7-carboxy-7-deazaguanine synthase from Rhodopirellula baltica (strain DSM 10527 / NCIMB 13988 / SH1).